Consider the following 210-residue polypeptide: Mating-type-like protein ALPHA2, silenced copy at MTL3 (210 aa).

The homeobox; TALE-type DNA-binding region spans 108–170 (ASYRGHRFTR…NRRRKQKSIY (63 aa)).

Belongs to the TALE/M-ATYP homeobox family.

It localises to the nucleus. In terms of biological role, mating type proteins are sequence specific DNA-binding proteins that act as master switches in yeast differentiation by controlling gene expression in a cell type-specific fashion. The sequence is that of Mating-type-like protein ALPHA2, silenced copy at MTL3 (MTL3alpha2) from Candida glabrata (strain ATCC 2001 / BCRC 20586 / JCM 3761 / NBRC 0622 / NRRL Y-65 / CBS 138) (Yeast).